Reading from the N-terminus, the 73-residue chain is UPF0150 protein ssl0259 (73 aa).

The protein belongs to the UPF0150 family.

This chain is UPF0150 protein ssl0259, found in Synechocystis sp. (strain ATCC 27184 / PCC 6803 / Kazusa).